The chain runs to 1061 residues: Chimeric ERCC6-PGBD3 protein (1061 aa).

The disordered stretch occupies residues M1–G39. Residues H8–E27 show a composition bias toward polar residues. The residue at position 158 (S158) is a Phosphoserine. Residue K255 forms a Glycyl lysine isopeptide (Lys-Gly) (interchain with G-Cter in SUMO2) linkage. Disordered stretches follow at residues K287–K323, G344–S466, V494–L521, and S537–R573. Positions R353 to A363 are enriched in basic and acidic residues. A compositionally biased stretch (acidic residues) spans E364–E392. A phosphoserine mark is found at S429 and S430. A compositionally biased stretch (basic and acidic residues) spans R451–K462. Residues S506 to G515 are compositionally biased toward acidic residues. A Phosphoserine modification is found at S554.

Expressed in heart and oocytes, but not in granulosa cells (at protein level).

It is found in the nucleus. In terms of biological role, involved in repair of DNA damage following UV irradiation, acting either in the absence of ERCC6 or synergistically with ERCC6. Involved in the regulation of gene expression. In the absence of ERCC6, induces the expression of genes characteristic of interferon-like antiviral responses. This response is almost completely suppressed in the presence of ERCC6. In the presence of ERCC6, regulates the expression of genes involved in metabolism regulation, including IGFBP5 and IGFBP7. In vitro binds to PGBD3-related transposable elements, called MER85s; these non-autonomous 140 bp elements are characterized by the presence of PGBD3 terminal inverted repeats and the absence of internal transposase ORF. In Homo sapiens (Human), this protein is Chimeric ERCC6-PGBD3 protein.